The primary structure comprises 485 residues: Cytosol non-specific dipeptidase (485 aa).

Zn(2+) is bound at residue histidine 76. The active site involves aspartate 78. Zn(2+) is bound at residue aspartate 115. The active-site Proton acceptor is glutamate 145. Positions 146 and 169 each coordinate Zn(2+). An N6-acetyllysine modification is found at lysine 296. Position 457 (histidine 457) interacts with Zn(2+).

It belongs to the peptidase M20C family. Zn(2+) is required as a cofactor. Co(2+) serves as cofactor.

The enzyme catalyses Hydrolysis of dipeptides, preferentially hydrophobic dipeptides including prolyl amino acids.. With respect to regulation, inhibited by metal chelators. Its function is as follows. Dipeptidase with broad substrate specificity. Requires dipeptide substrates with an unblocked N-terminus and the amino group in the alpha or beta position. Non-protein amino acids and proline are not accepted in the C-terminal position, whereas some dipeptide amides and formyl amino acids are hydrolyzed. Also shows cysteinylglycinase activity, which is sufficient for E.coli to utilize cysteinylglycine as a cysteine source. This Escherichia coli (strain K12) protein is Cytosol non-specific dipeptidase (pepD).